Reading from the N-terminus, the 418-residue chain is MDPDLFLRKVSTLQAGFRGFLVRRQFQSLRAEYEAIVQEIEGDLSTLQWTGGWIPKPVFLPEAKSHQSWKAEKISNPEQKLWSHSPHKDSEKELIWEEMVQKKTEKSPANPGSLCRDDSAWPQAEQGRKASQGNSQDTSVSKMENADLGLSQSQQELQEQRNHLAMELLWLQQAINSRKEYLILKQTLRSPEASQTRDKHRGQAYEKTSLHSSCVLDNQSYRDRIIGESHHAEDSSHKGRLKPQKHPDSVTSAGKTTAGSKGRELCYRNSASQLPAALESQAGGDRVTKGPDHGGQPFKETSLQQLKVLEDQIPGDLKFRSPCSRKAETQLPTLSENQNIEDRYSRKPSRSAGPCDLNILEGHMIWDETLAGQEQGSLDLIRTKPPKSQPPSAGSSGHGNTSELSPEGWKNRGILQWR.

Positions 6–35 (FLRKVSTLQAGFRGFLVRRQFQSLRAEYEA) constitute an IQ domain. Disordered regions lie at residues 101-142 (QKKT…SVSK), 230-264 (HHAE…KGRE), 280-299 (SQAG…QPFK), 327-355 (AETQ…AGPC), and 376-418 (GSLD…LQWR). 2 stretches are compositionally biased toward polar residues: residues 129–142 (KASQ…SVSK) and 249–259 (SVTSAGKTTAG). A coiled-coil region spans residues 141 to 176 (SKMENADLGLSQSQQELQEQRNHLAMELLWLQQAIN). Residues 390–404 (PPSAGSSGHGNTSEL) show a composition bias toward polar residues.

This Mus musculus (Mouse) protein is IQ domain-containing protein C (Iqcc).